The chain runs to 451 residues: Tubulin beta-4 chain (451 aa).

Residues Q11, E69, S138, G142, T143, G144, N204, and N226 each contribute to the GTP site. E69 is a binding site for Mg(2+). Positions 417–427 (DLVSEYQQYQD) are enriched in polar residues. The interval 417–451 (DLVSEYQQYQDATAEEEGEYDEDDGGYGDEDDGMM) is disordered. Acidic residues predominate over residues 429–451 (TAEEEGEYDEDDGGYGDEDDGMM).

Belongs to the tubulin family. In terms of assembly, dimer of alpha and beta chains. A typical microtubule is a hollow water-filled tube with an outer diameter of 25 nm and an inner diameter of 15 nM. Alpha-beta heterodimers associate head-to-tail to form protofilaments running lengthwise along the microtubule wall with the beta-tubulin subunit facing the microtubule plus end conferring a structural polarity. Microtubules usually have 13 protofilaments but different protofilament numbers can be found in some organisms and specialized cells. The cofactor is Mg(2+).

The protein resides in the cytoplasm. Its subcellular location is the cytoskeleton. Tubulin is the major constituent of microtubules, a cylinder consisting of laterally associated linear protofilaments composed of alpha- and beta-tubulin heterodimers. Microtubules grow by the addition of GTP-tubulin dimers to the microtubule end, where a stabilizing cap forms. Below the cap, tubulin dimers are in GDP-bound state, owing to GTPase activity of alpha-tubulin. This Oomycete-like sp. (strain MacKay2000) protein is Tubulin beta-4 chain (TUBB4).